The sequence spans 457 residues: UDP-N-acetylmuramate--L-alanine ligase (457 aa).

Residue 109–115 (GTDGKTT) coordinates ATP.

The protein belongs to the MurCDEF family.

Its subcellular location is the cytoplasm. The catalysed reaction is UDP-N-acetyl-alpha-D-muramate + L-alanine + ATP = UDP-N-acetyl-alpha-D-muramoyl-L-alanine + ADP + phosphate + H(+). It functions in the pathway cell wall biogenesis; peptidoglycan biosynthesis. In terms of biological role, cell wall formation. The sequence is that of UDP-N-acetylmuramate--L-alanine ligase (murC) from Thermotoga maritima (strain ATCC 43589 / DSM 3109 / JCM 10099 / NBRC 100826 / MSB8).